Reading from the N-terminus, the 174-residue chain is NADH-quinone oxidoreductase subunit I (174 aa).

2 consecutive 4Fe-4S ferredoxin-type domains span residues 44 to 74 (LNRYPDGLEKCIGCELCAWACPADAIYVEGD) and 90 to 119 (RVYQINYLRCIGCGLCIEACPTRALTMTND). Residues C54, C57, C60, C64, C99, C102, C105, and C109 each contribute to the [4Fe-4S] cluster site.

The protein belongs to the complex I 23 kDa subunit family. In terms of assembly, NDH-1 is composed of 14 different subunits. Subunits NuoA, H, J, K, L, M, N constitute the membrane sector of the complex. [4Fe-4S] cluster serves as cofactor.

Its subcellular location is the cell membrane. The enzyme catalyses a quinone + NADH + 5 H(+)(in) = a quinol + NAD(+) + 4 H(+)(out). Functionally, NDH-1 shuttles electrons from NADH, via FMN and iron-sulfur (Fe-S) centers, to quinones in the respiratory chain. The immediate electron acceptor for the enzyme in this species is believed to be menaquinone. Couples the redox reaction to proton translocation (for every two electrons transferred, four hydrogen ions are translocated across the cytoplasmic membrane), and thus conserves the redox energy in a proton gradient. This is NADH-quinone oxidoreductase subunit I from Mycobacterium sp. (strain KMS).